The following is a 388-amino-acid chain: Interferon alpha/beta receptor 1b (388 aa).

2 Fibronectin type-III domains span residues 5–102 (LPQP…FCPD) and 109–211 (PPSR…TEGD). The helical transmembrane segment at 217-237 (IFLYFLVSMMVCFLLVLLSSY) threads the bilayer. Residues 308–357 (TAPPSELEQDSGRHIRQDSGDSGIYSTEGGSAQQGRSGGEPIRRDQEVDS) are disordered. Residues 317–326 (DSGRHIRQDS) show a composition bias toward basic and acidic residues. Over residues 331–342 (IYSTEGGSAQQG) the composition is skewed to polar residues.

Belongs to the type II cytokine receptor family. Heterodimer with IFNAR2; forming the receptor for type I interferon.

It localises to the cell membrane. Its subcellular location is the cytoplasm. The protein resides in the perinuclear region. Its function is as follows. Together with IFNAR2, forms the heterodimeric receptor for type I interferons (including interferons alpha, beta, epsilon, omega and kappa). Type I interferon binding activates the JAK-STAT signaling cascade, resulting in transcriptional activation or repression of interferon-regulated genes that encode the effectors of the interferon response. Mechanistically, type I interferon-binding brings the IFNAR1 and IFNAR2 subunits into close proximity with one another, driving their associated Janus kinases (JAKs) (TYK2 bound to IFNAR1 and JAK1 bound to IFNAR2) to cross-phosphorylate one another. The activated kinases phosphorylate specific tyrosine residues on the intracellular domains of IFNAR1 and IFNAR2, forming docking sites for the STAT transcription factors. STAT proteins are then phosphorylated by the JAKs, promoting their translocation into the nucleus to regulate expression of interferon-regulated genes. The protein is Interferon alpha/beta receptor 1b of Oncorhynchus mykiss (Rainbow trout).